We begin with the raw amino-acid sequence, 388 residues long: Chorismate synthase (388 aa).

Positions 39 and 45 each coordinate NADP(+). Residues 130 to 132, 251 to 252, G296, 311 to 315, and R337 contribute to the FMN site; these read RSS, NA, and KPIPT.

It belongs to the chorismate synthase family. Homotetramer. It depends on FMNH2 as a cofactor.

It carries out the reaction 5-O-(1-carboxyvinyl)-3-phosphoshikimate = chorismate + phosphate. Its pathway is metabolic intermediate biosynthesis; chorismate biosynthesis; chorismate from D-erythrose 4-phosphate and phosphoenolpyruvate: step 7/7. In terms of biological role, catalyzes the anti-1,4-elimination of the C-3 phosphate and the C-6 proR hydrogen from 5-enolpyruvylshikimate-3-phosphate (EPSP) to yield chorismate, which is the branch point compound that serves as the starting substrate for the three terminal pathways of aromatic amino acid biosynthesis. This reaction introduces a second double bond into the aromatic ring system. The polypeptide is Chorismate synthase (Streptococcus pneumoniae (strain 70585)).